The sequence spans 332 residues: C4-dicarboxylate-binding periplasmic protein DctP (332 aa).

The first 22 residues, 1 to 22 (MFKPLTLIAASILAVTSFNAAA), serve as a signal peptide directing secretion.

Belongs to the bacterial solute-binding protein 7 family. In terms of assembly, the complex comprises the extracytoplasmic solute receptor protein DctP, and the two transmembrane proteins DctQ and DctM.

The protein resides in the periplasm. Functionally, part of the tripartite ATP-independent periplasmic (TRAP) transport system DctPQM involved in C4-dicarboxylates uptake. The sequence is that of C4-dicarboxylate-binding periplasmic protein DctP from Vibrio cholerae serotype O1 (strain ATCC 39315 / El Tor Inaba N16961).